A 210-amino-acid chain; its full sequence is Pyridoxine/pyridoxamine 5'-phosphate oxidase (210 aa).

Residues 7-10 (RQSY) and Lys65 each bind substrate. Residues 60-65 (RIVLIK), 75-76 (FT), Arg81, Lys82, and Gln104 contribute to the FMN site. Substrate is bound by residues Tyr122, Arg126, and Ser130. Residues 139–140 (QS) and Trp182 contribute to the FMN site. 188 to 190 (RLH) serves as a coordination point for substrate. Arg192 contributes to the FMN binding site.

The protein belongs to the pyridoxamine 5'-phosphate oxidase family. As to quaternary structure, homodimer. It depends on FMN as a cofactor.

It catalyses the reaction pyridoxamine 5'-phosphate + O2 + H2O = pyridoxal 5'-phosphate + H2O2 + NH4(+). The catalysed reaction is pyridoxine 5'-phosphate + O2 = pyridoxal 5'-phosphate + H2O2. It functions in the pathway cofactor metabolism; pyridoxal 5'-phosphate salvage; pyridoxal 5'-phosphate from pyridoxamine 5'-phosphate: step 1/1. It participates in cofactor metabolism; pyridoxal 5'-phosphate salvage; pyridoxal 5'-phosphate from pyridoxine 5'-phosphate: step 1/1. Catalyzes the oxidation of either pyridoxine 5'-phosphate (PNP) or pyridoxamine 5'-phosphate (PMP) into pyridoxal 5'-phosphate (PLP). The polypeptide is Pyridoxine/pyridoxamine 5'-phosphate oxidase (Bordetella avium (strain 197N)).